Reading from the N-terminus, the 83-residue chain is Neurotoxin LmNaTx10 (83 aa).

Positions 1 to 19 are cleaved as a signal peptide; that stretch reads MNFLIFIAVASSLALGALC. One can recognise an LCN-type CS-alpha/beta domain in the interval 21 to 80; it reads KEGYPYDGNNCRYICFRNQYCDDLCKKLKGESGYCYGWNQSCYCYGLPDTEKTKPDKRCH. 4 disulfide bridges follow: C31-C79, C35-C55, C41-C62, and C45-C64.

Belongs to the long (4 C-C) scorpion toxin superfamily. Sodium channel inhibitor family. Alpha subfamily. In terms of tissue distribution, expressed by the venom gland.

It localises to the secreted. Binds voltage-independently at site-3 of voltage-gated sodium channels (Nav) and inhibits the inactivation of the activated channels, thereby blocking neuronal transmission. The sequence is that of Neurotoxin LmNaTx10 from Lychas mucronatus (Chinese swimming scorpion).